A 762-amino-acid chain; its full sequence is 5-methyltetrahydropteroyltriglutamate--homocysteine methyltransferase (762 aa).

Residues 17-20 and lysine 111 contribute to the 5-methyltetrahydropteroyltri-L-glutamate site; that span reads REWK. Residues 435–437 and glutamate 488 contribute to the L-homocysteine site; that span reads IGS. Residues 435–437 and glutamate 488 each bind L-methionine; that span reads IGS. Residues 519-520 and tryptophan 565 contribute to the 5-methyltetrahydropteroyltri-L-glutamate site; that span reads RC. Aspartate 603 is an L-homocysteine binding site. Aspartate 603 contacts L-methionine. Glutamate 609 contacts 5-methyltetrahydropteroyltri-L-glutamate. Histidine 645, cysteine 647, and glutamate 669 together coordinate Zn(2+). Histidine 698 functions as the Proton donor in the catalytic mechanism. Zn(2+) is bound at residue cysteine 730.

It belongs to the vitamin-B12 independent methionine synthase family. The cofactor is Zn(2+).

The catalysed reaction is 5-methyltetrahydropteroyltri-L-glutamate + L-homocysteine = tetrahydropteroyltri-L-glutamate + L-methionine. It participates in amino-acid biosynthesis; L-methionine biosynthesis via de novo pathway; L-methionine from L-homocysteine (MetE route): step 1/1. Its function is as follows. Catalyzes the transfer of a methyl group from 5-methyltetrahydrofolate to homocysteine resulting in methionine formation. The chain is 5-methyltetrahydropteroyltriglutamate--homocysteine methyltransferase from Bacillus thuringiensis (strain Al Hakam).